Reading from the N-terminus, the 542-residue chain is CTP synthase (542 aa).

Residues 1 to 265 (MTRYIFVTGG…DDIVVERFGL (265 aa)) are amidoligase domain. S13 provides a ligand contact to CTP. S13 is a binding site for UTP. ATP-binding positions include 14–19 (SLGKGI) and D71. The Mg(2+) site is built by D71 and E139. Residues 146–148 (DIE), 186–191 (KTKPTQ), and K222 each bind CTP. Residues 186–191 (KTKPTQ) and K222 contribute to the UTP site. The 252-residue stretch at 290–541 (TIAMVGKYME…VNAALKYSGK (252 aa)) folds into the Glutamine amidotransferase type-1 domain. G351 provides a ligand contact to L-glutamine. C378 serves as the catalytic Nucleophile; for glutamine hydrolysis. L-glutamine contacts are provided by residues 379-382 (LGMQ), E402, and R469. Active-site residues include H514 and E516.

It belongs to the CTP synthase family. In terms of assembly, homotetramer.

It carries out the reaction UTP + L-glutamine + ATP + H2O = CTP + L-glutamate + ADP + phosphate + 2 H(+). The catalysed reaction is L-glutamine + H2O = L-glutamate + NH4(+). The enzyme catalyses UTP + NH4(+) + ATP = CTP + ADP + phosphate + 2 H(+). Its pathway is pyrimidine metabolism; CTP biosynthesis via de novo pathway; CTP from UDP: step 2/2. With respect to regulation, allosterically activated by GTP, when glutamine is the substrate; GTP has no effect on the reaction when ammonia is the substrate. The allosteric effector GTP functions by stabilizing the protein conformation that binds the tetrahedral intermediate(s) formed during glutamine hydrolysis. Inhibited by the product CTP, via allosteric rather than competitive inhibition. In terms of biological role, catalyzes the ATP-dependent amination of UTP to CTP with either L-glutamine or ammonia as the source of nitrogen. Regulates intracellular CTP levels through interactions with the four ribonucleotide triphosphates. The chain is CTP synthase from Pseudomonas aeruginosa (strain LESB58).